Reading from the N-terminus, the 395-residue chain is Dual specificity mitogen-activated protein kinase kinase 1 (395 aa).

Residues 1–24 (MPKKKPTPIQLNPNPEGTAVNGTP) are disordered. The span at 9 to 24 (IQLNPNPEGTAVNGTP) shows a compositional bias: polar residues. A Protein kinase domain is found at 68 to 363 (FEKVSELGAG…LKQLMVHSFI (296 aa)). ATP-binding positions include 74–82 (LGAGNGGVV) and Lys-97. Catalysis depends on Asp-190, which acts as the Proton acceptor. Phosphoserine; by RAF occurs at positions 218 and 222. The tract at residues 284–305 (ASSELAPRPRPPGRPISSYGPD) is disordered.

It belongs to the protein kinase superfamily. STE Ser/Thr protein kinase family. MAP kinase kinase subfamily. In terms of processing, activated by phosphorylation on Ser/Thr catalyzed by MAP kinase kinase kinases (RAF or MOS). Expressed in the central nervous system, kidney, liver, intestine and the hematopoietic system.

The protein resides in the cytoplasm. It localises to the cytoskeleton. Its subcellular location is the microtubule organizing center. It is found in the centrosome. The protein localises to the spindle pole body. The protein resides in the nucleus. The catalysed reaction is L-seryl-[protein] + ATP = O-phospho-L-seryl-[protein] + ADP + H(+). It carries out the reaction L-threonyl-[protein] + ATP = O-phospho-L-threonyl-[protein] + ADP + H(+). It catalyses the reaction L-tyrosyl-[protein] + ATP = O-phospho-L-tyrosyl-[protein] + ADP + H(+). In terms of biological role, dual specificity protein kinase which acts as an essential component of the MAP kinase signal transduction pathway. Binding of extracellular ligands such as growth factors, cytokines and hormones to their cell-surface receptors activates the MAPK/ERK cascade, ultimately leading to phosphorylation of a threonine and a tyrosine residue in a Thr-Glu-Tyr sequence located in MAP kinases. Depending on the cellular context, this pathway mediates diverse biological functions such as cell growth, adhesion, survival and differentiation predominantly through the regulation of transcription, metabolism and cytoskeletal rearrangements. The protein is Dual specificity mitogen-activated protein kinase kinase 1 (map2k1) of Xenopus laevis (African clawed frog).